The sequence spans 199 residues: Putative pseudouridine methyltransferase (199 aa).

Residues methionine 132 and cysteine 186 each contribute to the S-adenosyl-L-methionine site.

It belongs to the methyltransferase superfamily. TrmY family.

Its subcellular location is the cytoplasm. The polypeptide is Putative pseudouridine methyltransferase (Vibrio atlanticus (strain LGP32) (Vibrio splendidus (strain Mel32))).